The primary structure comprises 1193 residues: Probable DNA-directed RNA polymerase II subunit RPB2 homolog (1193 aa).

Asp-808 serves as a coordination point for Mg(2+). Residues Cys-1137, Cys-1140, Cys-1155, and Cys-1158 each contribute to the Zn(2+) site. Residues 1137-1158 form a C4-type zinc finger; sequence CVPCKSYFKVVKTQNGFFCSGC.

It belongs to the RNA polymerase beta chain family.

It carries out the reaction RNA(n) + a ribonucleoside 5'-triphosphate = RNA(n+1) + diphosphate. In terms of biological role, component of the DNA-dependent RNA polymerase that catalyzes the transcription of DNA into RNA using the four ribonucleoside triphosphates as substrates. Second largest component of RNA polymerase II which synthesizes mRNA precursors and many functional non-coding RNAs. Proposed to contribute to the polymerase catalytic activity and forms the polymerase active center together with the largest subunit. The polypeptide is Probable DNA-directed RNA polymerase II subunit RPB2 homolog (Invertebrate iridescent virus 6 (IIV-6)).